Consider the following 110-residue polypeptide: MQSKASANMVRIAPRKARLVVDLIRGKQIGEALSILAYTNKAATPIVEKVLKSAIANAEHNFDMNIENLVVTEAYVNEGPTLKRFRPRAMGRASRINKRTSHVHIVVSEK.

It belongs to the universal ribosomal protein uL22 family. As to quaternary structure, part of the 50S ribosomal subunit.

In terms of biological role, this protein binds specifically to 23S rRNA; its binding is stimulated by other ribosomal proteins, e.g. L4, L17, and L20. It is important during the early stages of 50S assembly. It makes multiple contacts with different domains of the 23S rRNA in the assembled 50S subunit and ribosome. Its function is as follows. The globular domain of the protein is located near the polypeptide exit tunnel on the outside of the subunit, while an extended beta-hairpin is found that lines the wall of the exit tunnel in the center of the 70S ribosome. The polypeptide is Large ribosomal subunit protein uL22 (Exiguobacterium sibiricum (strain DSM 17290 / CCUG 55495 / CIP 109462 / JCM 13490 / 255-15)).